Consider the following 359-residue polypeptide: MAGMKSSPSQDEEACVLAIQLATSTVLPMILKSAIELDILNTISKAGPGNYLSPSDLASKLLMSNPHAPIMLERILRVLATYKVLGCKRSELSNGEVEWLYCWTPVCKFLSNNEDGASIAPLLLVHQDKVPMKSWYHLTDAVLDGGTAFNKAYGMNIFDYASQDPQFNKVFNRSMAGHSTITMKKIVETYNGFEGLKSIVDVGGGSGATLNMIISKYPTIKGINFDLPHVVGDSPIHPGVEHVGGDMFASVPKGDAIFLKWIFHSWSDEDCLRILKNCYEALADNKKVIVAEFIIPEVPGGSDDATKSVVHLDAIMLAYVPGGKERTEKEFESLATRAGFKSFRKVCCAFNTWIMEFSK.

Histidine 126 contacts bergaptol. The S-adenosyl-L-homocysteine site is built by serine 179, glycine 203, aspartate 226, aspartate 246, and lysine 260. Histidine 264 is a binding site for bergaptol. Histidine 264 serves as the catalytic Proton acceptor.

The protein belongs to the class I-like SAM-binding methyltransferase superfamily. Cation-independent O-methyltransferase family. COMT subfamily.

The catalysed reaction is a 5-hydroxyfurocoumarin + S-adenosyl-L-methionine = a 5-methoxyfurocoumarin + S-adenosyl-L-homocysteine + H(+). It carries out the reaction bergaptol + S-adenosyl-L-methionine = bergapten + S-adenosyl-L-homocysteine. Inhibited by Cu(2+), Ni(2+) and Co(2+). The protein is Bergaptol O-methyltransferase of Glehnia littoralis (Beach silvertop).